A 154-amino-acid polypeptide reads, in one-letter code: Deoxyuridine 5'-triphosphate nucleotidohydrolase (154 aa).

Residues 64–66 (RSG), Asn-77, 81–83 (TID), and Lys-91 contribute to the substrate site.

Belongs to the dUTPase family. Homotrimer. The cofactor is Mg(2+).

It catalyses the reaction dUTP + H2O = dUMP + diphosphate + H(+). It participates in pyrimidine metabolism; dUMP biosynthesis; dUMP from dCTP (dUTP route): step 2/2. This enzyme is involved in nucleotide metabolism: it produces dUMP, the immediate precursor of thymidine nucleotides and it decreases the intracellular concentration of dUTP so that uracil cannot be incorporated into DNA. This chain is Deoxyuridine 5'-triphosphate nucleotidohydrolase, found in Mycobacterium marinum (strain ATCC BAA-535 / M).